Here is a 206-residue protein sequence, read N- to C-terminus: Outer-membrane lipoprotein carrier protein (206 aa).

The N-terminal stretch at 1-21 is a signal peptide; the sequence is MKKLLCAVLLSPLLYSNAVLA.

It belongs to the LolA family. In terms of assembly, monomer.

It is found in the periplasm. Functionally, participates in the translocation of lipoproteins from the inner membrane to the outer membrane. Only forms a complex with a lipoprotein if the residue after the N-terminal Cys is not an aspartate (The Asp acts as a targeting signal to indicate that the lipoprotein should stay in the inner membrane). In Shewanella sp. (strain ANA-3), this protein is Outer-membrane lipoprotein carrier protein.